The chain runs to 449 residues: UDP-N-acetylmuramoylalanine--D-glutamate ligase (449 aa).

Residue 118-124 (GTNGKTT) participates in ATP binding.

This sequence belongs to the MurCDEF family.

It localises to the cytoplasm. The catalysed reaction is UDP-N-acetyl-alpha-D-muramoyl-L-alanine + D-glutamate + ATP = UDP-N-acetyl-alpha-D-muramoyl-L-alanyl-D-glutamate + ADP + phosphate + H(+). Its pathway is cell wall biogenesis; peptidoglycan biosynthesis. Its function is as follows. Cell wall formation. Catalyzes the addition of glutamate to the nucleotide precursor UDP-N-acetylmuramoyl-L-alanine (UMA). The sequence is that of UDP-N-acetylmuramoylalanine--D-glutamate ligase from Staphylococcus aureus (strain Mu3 / ATCC 700698).